The primary structure comprises 394 residues: Elongation factor Tu (394 aa).

Residues K10–T204 enclose the tr-type G domain. The tract at residues G19–T26 is G1. GTP is bound at residue G19–T26. T26 contacts Mg(2+). The tract at residues G60 to N64 is G2. The segment at D81–G84 is G3. GTP contacts are provided by residues D81 to H85 and N136 to D139. The tract at residues N136–D139 is G4. The interval S174 to L176 is G5.

It belongs to the TRAFAC class translation factor GTPase superfamily. Classic translation factor GTPase family. EF-Tu/EF-1A subfamily. As to quaternary structure, monomer.

It is found in the cytoplasm. The catalysed reaction is GTP + H2O = GDP + phosphate + H(+). Its function is as follows. GTP hydrolase that promotes the GTP-dependent binding of aminoacyl-tRNA to the A-site of ribosomes during protein biosynthesis. The polypeptide is Elongation factor Tu (Mycoplasma genitalium (strain ATCC 33530 / DSM 19775 / NCTC 10195 / G37) (Mycoplasmoides genitalium)).